We begin with the raw amino-acid sequence, 214 residues long: Galactokinase (214 aa).

4 residues coordinate alpha-D-galactose: R47, D53, H54, and D56. ATP-binding residues include G149, G151, S153, and S154. D199 lines the alpha-D-galactose pocket. Residue D199 is the Proton acceptor of the active site.

It belongs to the GHMP kinase family. GalK subfamily.

It catalyses the reaction alpha-D-galactose + ATP = alpha-D-galactose 1-phosphate + ADP + H(+). It participates in carbohydrate metabolism; galactose metabolism. In terms of biological role, galactokinase is a key enzyme in the galactose metabolism where it catalyzes the conversion of alpha-D-galactose to galactose 1-phosphate. Can also induce the transcription of the gal genes in response to the organism being challenged with galactose as the sole source of carbon. This chain is Galactokinase, found in Candida maltosa (Yeast).